The sequence spans 209 residues: Urease accessory protein UreG (209 aa).

Position 18–25 (18–25 (GPVGSGKT)) interacts with GTP.

Belongs to the SIMIBI class G3E GTPase family. UreG subfamily. As to quaternary structure, homodimer. UreD, UreF and UreG form a complex that acts as a GTP-hydrolysis-dependent molecular chaperone, activating the urease apoprotein by helping to assemble the nickel containing metallocenter of UreC. The UreE protein probably delivers the nickel.

The protein resides in the cytoplasm. Its function is as follows. Facilitates the functional incorporation of the urease nickel metallocenter. This process requires GTP hydrolysis, probably effectuated by UreG. This chain is Urease accessory protein UreG, found in Cupriavidus necator (strain ATCC 17699 / DSM 428 / KCTC 22496 / NCIMB 10442 / H16 / Stanier 337) (Ralstonia eutropha).